The sequence spans 147 residues: Large ribosomal subunit protein bL9 (147 aa).

It belongs to the bacterial ribosomal protein bL9 family.

In terms of biological role, binds to the 23S rRNA. This chain is Large ribosomal subunit protein bL9, found in Shouchella clausii (strain KSM-K16) (Alkalihalobacillus clausii).